Here is a 223-residue protein sequence, read N- to C-terminus: Translation initiation factor 6 (223 aa).

This sequence belongs to the eIF-6 family. As to quaternary structure, associates with the 50S ribosomal subunit, specifically with protein L14. Binds to 23S rRNA, possibly between where the 30S and 50S subunits associate to initiate translation. Post-translationally, modified in an unknown fashion (not phosphorylation) following release from 50S ribosomal subunits.

Its function is as follows. Binds to the 50S ribosomal subunit and prevents its association with the 30S ribosomal subunit to form the 70S initiation complex. Inhibits translation of both leadered and leaderless mRNAs, maybe by binding to the 50S ribosome subunit, preventing it from binding to the 30S subunit. The protein is Translation initiation factor 6 of Saccharolobus solfataricus (strain ATCC 35092 / DSM 1617 / JCM 11322 / P2) (Sulfolobus solfataricus).